The sequence spans 165 residues: MAKLILVFATLALFILLANASIYRTVVEFEEDDDVSNPQQGKCQREFMKHQQLRGCKQWIRKRAQQGRIGYEADDFELTLDVDLEDDENPMGPQQQSSLKMCCNELRQVDKMCVCPTLKKAAQQVRFQGMHGQQQVQHVFQTAKNLPNVCKIPTVGSCQFKASPY.

Positions 1-20 (MAKLILVFATLALFILLANA) are cleaved as a signal peptide. 2 consecutive propeptides follow at residues 21-37 (SIYR…DVSN) and 71-89 (YEAD…DDEN).

It belongs to the 2S seed storage albumins family. The mature protein consists of a small and a large chain linked by disulfide bonds.

In terms of biological role, this is a 2S seed storage protein. The polypeptide is 2S seed storage protein 5 (SESA5) (Arabidopsis thaliana (Mouse-ear cress)).